Reading from the N-terminus, the 530-residue chain is Testis-expressed protein 44 (530 aa).

Over residues 1 to 10 (MTAEPLEDPE) the composition is skewed to acidic residues. Disordered regions lie at residues 1–85 (MTAE…FIRT), 207–233 (ATSA…TSLL), 256–290 (ENNR…QPVL), and 305–384 (QTSV…SPDF). Composition is skewed to polar residues over residues 11–26 (ASSS…SSDN), 222–233 (GQDNPEETTSLL), and 257–280 (NNRT…TLGN). Residues 365 to 381 (PPDPPDPGSPGGSPPHS) show a composition bias toward pro residues. Residue Ser468 is modified to Phosphoserine.

Its subcellular location is the cytoplasm. The sequence is that of Testis-expressed protein 44 (Tex44) from Mus musculus (Mouse).